The following is a 575-amino-acid chain: Sclareol synthase, chloroplastic (575 aa).

Residues 1–51 (MSLAFNVGVTPFSGQRVGSRKEKFPVQGFPVTTPNRSRLIVNCSLTTIDFM) constitute a chloroplast transit peptide. The Mg(2+) site is built by Asp-329, Asp-333, Asn-473, Ser-477, and Glu-481. Residues 329–333 (DDFFD) carry the DDXXD motif motif.

This sequence belongs to the terpene synthase family.

Its subcellular location is the plastid. The protein resides in the chloroplast. It carries out the reaction 8-hydroxycopalyl diphosphate + H2O = sclareol + diphosphate. It functions in the pathway secondary metabolite biosynthesis; terpenoid biosynthesis. Functionally, involved in the biosynthesis of labdane-type diterpenoid including sclareol, a diterpene-diol that is used as fragrance and flavoring, and has anticancer effects (able to kill leukemic and colon cancer cells by apoptosis). Sclareol can also be used as synthesis precursor of ambergris substitution fragance products such as ambrox. Terpene synthase that catalyzes the conversion of 8-hydroxy-copalyl diphosphate to sclareol. This chain is Sclareol synthase, chloroplastic, found in Salvia sclarea (Clary sage).